A 779-amino-acid polypeptide reads, in one-letter code: Acyl-homoserine lactone acylase PvdQ (779 aa).

Positions 1-25 are cleaved as a signal peptide; that stretch reads MIISRPLCSFVFAGLSFAVILPAQA. The propeptide at 202 to 223 is spacer peptide; the sequence is AQQAQALQLAAARNQRFALERG. Catalysis depends on serine 224, which acts as the Nucleophile. Positions 731 to 746 are enriched in polar residues; the sequence is ESSNPQSAHSSDQTEA. Residues 731–750 are disordered; it reads ESSNPQSAHSSDQTEAFSKK.

The protein belongs to the peptidase S45 family. As to quaternary structure, heterodimer of an alpha subunit and a beta subunit processed from the same precursor.

It localises to the periplasm. The catalysed reaction is an N-acyl-L-homoserine lactone + H2O = L-homoserine lactone + a carboxylate. Functionally, catalyzes the deacylation of acyl-homoserine lactone (AHL or acyl-HSL), releasing homoserine lactone (HSL) and the corresponding fatty acid. Possesses a specificity for the degradation of long-chain acyl-HSLs (side chains of 11 to 14 carbons in length). This Pseudomonas syringae pv. syringae (strain B728a) protein is Acyl-homoserine lactone acylase PvdQ (pvdQ).